The primary structure comprises 397 residues: S-adenosylmethionine synthase (397 aa).

His15 contacts ATP. Asp17 provides a ligand contact to Mg(2+). A K(+)-binding site is contributed by Glu43. L-methionine is bound by residues Glu56 and Gln99. The tract at residues 99-109 is flexible loop; it reads QSPDIAQGVTA. Residues 173 to 175, 242 to 243, Asp251, 257 to 258, Ala274, and Lys278 contribute to the ATP site; these read DGK, KF, and RK. Residue Asp251 participates in L-methionine binding. Lys282 lines the L-methionine pocket.

The protein belongs to the AdoMet synthase family. Homotetramer; dimer of dimers. It depends on Mg(2+) as a cofactor. The cofactor is K(+).

The protein localises to the cytoplasm. It catalyses the reaction L-methionine + ATP + H2O = S-adenosyl-L-methionine + phosphate + diphosphate. The protein operates within amino-acid biosynthesis; S-adenosyl-L-methionine biosynthesis; S-adenosyl-L-methionine from L-methionine: step 1/1. In terms of biological role, catalyzes the formation of S-adenosylmethionine (AdoMet) from methionine and ATP. The overall synthetic reaction is composed of two sequential steps, AdoMet formation and the subsequent tripolyphosphate hydrolysis which occurs prior to release of AdoMet from the enzyme. This Cutibacterium acnes (strain DSM 16379 / KPA171202) (Propionibacterium acnes) protein is S-adenosylmethionine synthase.